A 317-amino-acid polypeptide reads, in one-letter code: Thiamine thiazole synthase (317 aa).

Residues C78, 99–100, G107, and V172 contribute to the substrate site; that span reads EA. Residue C206 is modified to 2,3-didehydroalanine (Cys). Residues D208, H223, M275, and 285–287 each bind substrate; that span reads RMG.

The protein belongs to the THI4 family. In terms of assembly, homooctamer. Fe cation is required as a cofactor. During the catalytic reaction, a sulfide is transferred from Cys-206 to a reaction intermediate, generating a dehydroalanine residue.

The protein resides in the cytoplasm. The protein localises to the nucleus. It catalyses the reaction [ADP-thiazole synthase]-L-cysteine + glycine + NAD(+) = [ADP-thiazole synthase]-dehydroalanine + ADP-5-ethyl-4-methylthiazole-2-carboxylate + nicotinamide + 3 H2O + 2 H(+). Functionally, involved in biosynthesis of the thiamine precursor thiazole. Catalyzes the conversion of NAD and glycine to adenosine diphosphate 5-(2-hydroxyethyl)-4-methylthiazole-2-carboxylic acid (ADT), an adenylated thiazole intermediate. The reaction includes an iron-dependent sulfide transfer from a conserved cysteine residue of the protein to a thiazole intermediate. The enzyme can only undergo a single turnover, which suggests it is a suicide enzyme. May have additional roles in adaptation to various stress conditions and in DNA damage tolerance. This chain is Thiamine thiazole synthase, found in Yarrowia lipolytica (strain CLIB 122 / E 150) (Yeast).